The sequence spans 419 residues: MDTIFAEATPPGRGGVSVVRLSGPKAHATLESLAGPVATPRMAALRALRDGDDLIDRALVIWFAEGHSFTGEEVAELHLHGAPVIASRLSQALLARGLRRAEAGEFTKRAFLNGRIDLAEAEGLADLLSAETEAQRKLAMRATEGELGRKADELRSKLIRAGALIEASIDFADEEVPDEVPEEALDLIKAVRSDIQGMLASYPATERLRQGYEVAIIGPPNAGKSTLLNRIGQREIALVSEIAGTTRDILELHTDLRGLPVTFLDTAGLRESSDPVEAMGVARAVQRAAEADLRIHLSVDGVPEETLVLGDIIVRSKADLGRGEETAISGLTGEGVAELLDLVYDRLRVRAADSGLVGHKRQAEALQRAVAALAIDDSLAPEFLAEALRQAAQALAMMVGRVGAEDYLDEIFSSFCIGK.

Positions 20, 76, and 115 each coordinate (6S)-5-formyl-5,6,7,8-tetrahydrofolate. In terms of domain architecture, TrmE-type G spans 211–348 (GYEVAIIGPP…LLDLVYDRLR (138 aa)). Asparagine 221 is a K(+) binding site. GTP is bound by residues 221–226 (NAGKST), 240–246 (SEIAGTT), and 265–268 (DTAG). Serine 225 serves as a coordination point for Mg(2+). Positions 240, 242, and 245 each coordinate K(+). Threonine 246 serves as a coordination point for Mg(2+). Lysine 419 serves as a coordination point for (6S)-5-formyl-5,6,7,8-tetrahydrofolate.

The protein belongs to the TRAFAC class TrmE-Era-EngA-EngB-Septin-like GTPase superfamily. TrmE GTPase family. As to quaternary structure, homodimer. Heterotetramer of two MnmE and two MnmG subunits. K(+) is required as a cofactor.

It localises to the cytoplasm. Its function is as follows. Exhibits a very high intrinsic GTPase hydrolysis rate. Involved in the addition of a carboxymethylaminomethyl (cmnm) group at the wobble position (U34) of certain tRNAs, forming tRNA-cmnm(5)s(2)U34. The chain is tRNA modification GTPase MnmE from Paracoccus denitrificans (strain Pd 1222).